The sequence spans 572 residues: [Pyruvate dehydrogenase [acetyl-transferring]]-phosphatase 1, mitochondrial (572 aa).

Positions 95–122 (NTSGNINMPSPNPKGTETQKSQRSQNDQ) are disordered. Residues 153-543 (RYDVAQLPSN…DDLTVTVAFF (391 aa)) form the PPM-type phosphatase domain. Mn(2+)-binding residues include Asp-197, Gly-198, Asp-424, and Asp-480. Positions 470–480 (EAQRPAFRYKD) are enriched in basic and acidic residues. Residues 470–492 (EAQRPAFRYKDNNSSSPSGSNPE) are disordered. The span at 481–491 (NNSSSPSGSNP) shows a compositional bias: low complexity.

The protein belongs to the PP2C family. It depends on Mg(2+) as a cofactor. Requires Mn(2+) as cofactor. Post-translationally, processed by mitochondrial inner membrane protease (IMP) complex and released to the intermembrane space.

The protein localises to the mitochondrion intermembrane space. It carries out the reaction O-phospho-L-seryl-[pyruvate dehydrogenase E1 alpha subunit] + H2O = L-seryl-[pyruvate dehydrogenase E1 alpha subunit] + phosphate. Its function is as follows. Catalyzes the dephosphorylation and concomitant reactivation of the E1 alpha subunit (PDA1) of the pyruvate dehydrogenase complex. This Saccharomyces cerevisiae (strain ATCC 204508 / S288c) (Baker's yeast) protein is [Pyruvate dehydrogenase [acetyl-transferring]]-phosphatase 1, mitochondrial (PTC5).